Here is a 318-residue protein sequence, read N- to C-terminus: Transaldolase (318 aa).

Residue Lys-132 is the Schiff-base intermediate with substrate of the active site.

This sequence belongs to the transaldolase family. Type 1 subfamily. Homodimer.

It localises to the cytoplasm. It carries out the reaction D-sedoheptulose 7-phosphate + D-glyceraldehyde 3-phosphate = D-erythrose 4-phosphate + beta-D-fructose 6-phosphate. It functions in the pathway carbohydrate degradation; pentose phosphate pathway; D-glyceraldehyde 3-phosphate and beta-D-fructose 6-phosphate from D-ribose 5-phosphate and D-xylulose 5-phosphate (non-oxidative stage): step 2/3. Functionally, transaldolase is important for the balance of metabolites in the pentose-phosphate pathway. This is Transaldolase from Shewanella sp. (strain MR-4).